Here is a 170-residue protein sequence, read N- to C-terminus: Shikimate kinase (170 aa).

11–16 is a binding site for ATP; the sequence is LSGKST. Residue Ser15 participates in Mg(2+) binding. Asp33, Arg57, and Gly79 together coordinate substrate. Arg119 lines the ATP pocket. Arg137 serves as a coordination point for substrate.

Belongs to the shikimate kinase family. In terms of assembly, monomer. Requires Mg(2+) as cofactor.

It localises to the cytoplasm. The enzyme catalyses shikimate + ATP = 3-phosphoshikimate + ADP + H(+). Its pathway is metabolic intermediate biosynthesis; chorismate biosynthesis; chorismate from D-erythrose 4-phosphate and phosphoenolpyruvate: step 5/7. Catalyzes the specific phosphorylation of the 3-hydroxyl group of shikimic acid using ATP as a cosubstrate. The sequence is that of Shikimate kinase from Clostridium botulinum (strain Kyoto / Type A2).